The primary structure comprises 213 residues: UPF0329 protein ECU04_0110 (213 aa).

It belongs to the UPF0329 family.

The chain is UPF0329 protein ECU04_0110 from Encephalitozoon cuniculi (strain GB-M1) (Microsporidian parasite).